Reading from the N-terminus, the 195-residue chain is Large ribosomal subunit protein uL5 (195 aa).

This sequence belongs to the universal ribosomal protein uL5 family. In terms of assembly, part of the 50S ribosomal subunit; part of the 5S rRNA/L5/L18/L25 subcomplex. Contacts the 5S rRNA and the P site tRNA. Forms a bridge to the 30S subunit in the 70S ribosome.

Functionally, this is one of the proteins that bind and probably mediate the attachment of the 5S RNA into the large ribosomal subunit, where it forms part of the central protuberance. In the 70S ribosome it contacts protein S13 of the 30S subunit (bridge B1b), connecting the 2 subunits; this bridge is implicated in subunit movement. Contacts the P site tRNA; the 5S rRNA and some of its associated proteins might help stabilize positioning of ribosome-bound tRNAs. The protein is Large ribosomal subunit protein uL5 of Leifsonia xyli subsp. xyli (strain CTCB07).